The primary structure comprises 1834 residues: Structure-specific endonuclease subunit SLX4 (1834 aa).

The segment at 1-669 is interaction with SLX4IP, ERCC4/XPF and MSH2; it reads MKLSVNEAQL…QDKHPDRGGR (669 aa). Residues 24-49 are disordered; it reads PGIDPRSSEDQPESLKTGQMMDESDE. Residue Lys-68 forms a Glycyl lysine isopeptide (Lys-Gly) (interchain with G-Cter in SUMO2) linkage. Residues 69 to 206 are disordered; it reads EVSGERKTQK…VPSPSKPRTA (138 aa). Residues 78 to 87 show a composition bias toward polar residues; the sequence is KAASNGTQIR. A compositionally biased stretch (low complexity) spans 95-104; the sequence is QTATKTKTLQ. Composition is skewed to polar residues over residues 156-172 and 180-204; these read TAQN…SPNL and NVPN…SKPR. A Phosphoserine modification is found at Ser-169. A Phosphoserine modification is found at Ser-287. Lys-291 participates in a covalent cross-link: Glycyl lysine isopeptide (Lys-Gly) (interchain with G-Cter in SUMO2). 2 UBZ4-type zinc fingers span residues 293 to 323 and 333 to 361; these read LFFC…DEAE and IPEC…VKME. Residues Cys-296, Cys-299, His-314, Cys-318, Cys-336, and Cys-339 each coordinate Zn(2+). Lys-347 is covalently cross-linked (Glycyl lysine isopeptide (Lys-Gly) (interchain with G-Cter in SUMO2)). Zn(2+)-binding residues include His-352 and Cys-356. A Glycyl lysine isopeptide (Lys-Gly) (interchain with G-Cter in SUMO2) cross-link involves residue Lys-359. Residues 376–385 are compositionally biased toward polar residues; it reads AQPEGSSSPP. Disordered regions lie at residues 376–417, 452–471, and 561–610; these read AQPE…DEAP, RPEA…PPLL, and QGLM…REHQ. A compositionally biased stretch (basic residues) spans 395-411; it reads GLKRRGPTSKKEPRKRR. Residues Lys-412 and Lys-458 each participate in a glycyl lysine isopeptide (Lys-Gly) (interchain with G-Cter in SUMO2) cross-link. Residues 575 to 584 show a composition bias toward basic and acidic residues; the sequence is EHSELSERRS. Residues 684 to 1834 are interaction with PLK1 and TERF2-TERF2IP; it reads MVNNPHLSDV…PRGKKKVERN (1151 aa). Positions 691 to 764 constitute a BTB domain; the sequence is SDVQFQTDSG…LYTADTGLPP (74 aa). Residues 801 to 870 are a coiled coil; that stretch reads EEKEAENCES…QRKLLQEERA (70 aa). Disordered stretches follow at residues 826 to 846 and 902 to 1151; these read EEEE…QENV and KVEE…EDEV. Glycyl lysine isopeptide (Lys-Gly) (interchain with G-Cter in SUMO2) cross-links involve residues Lys-835, Lys-902, and Lys-970. Basic and acidic residues-rich tracts occupy residues 902–916 and 965–979; these read KVEE…RDEA and CQAE…HSDD. Polar residues predominate over residues 986–1002; the sequence is LFSSTQGEISEPSQITS. The segment covering 1011 to 1020 has biased composition (basic and acidic residues); the sequence is VRERGLEVSH. Residues Ser-1028, Ser-1044, and Ser-1070 each carry the phosphoserine modification. A compositionally biased stretch (polar residues) spans 1059 to 1073; the sequence is PRSRGGTSQVGSPTL. Glycyl lysine isopeptide (Lys-Gly) (interchain with G-Cter in SUMO2) cross-links involve residues Lys-1081 and Lys-1093. Residues 1094 to 1111 show a composition bias toward basic and acidic residues; it reads EPGHQKGKERRSVLECRN. Residues Lys-1112 and Lys-1120 each participate in a glycyl lysine isopeptide (Lys-Gly) (interchain with G-Cter in SUMO2) cross-link. The residue at position 1121 (Ser-1121) is a Phosphoserine. A compositionally biased stretch (polar residues) spans 1124–1133; sequence IDLTQSNPDH. A Phosphoserine modification is found at Ser-1135. Residues Lys-1169, Lys-1179, and Lys-1180 each participate in a glycyl lysine isopeptide (Lys-Gly) (interchain with G-Cter in SUMO2) cross-link. A Phosphoserine modification is found at Ser-1185. 2 disordered regions span residues 1195-1504 and 1516-1564; these read IDVD…SRPS and GEEQ…TPMP. 2 stretches are compositionally biased toward polar residues: residues 1245–1254 and 1269–1279; these read PSEASTTDTS and CSSQTQISSLR. The interaction with MUS81 stretch occupies residues 1328-1648; that stretch reads VSPGTSDGRR…AGVHAQQEAT (321 aa). The span at 1338–1350 shows a compositional bias: basic residues; it reads QGHRSPSRPHPGG. Low complexity predominate over residues 1351–1362; it reads HPHSSPLAPHPI. The span at 1394–1403 shows a compositional bias: acidic residues; sequence EVGDSDDEQE. A compositionally biased stretch (basic and acidic residues) spans 1457 to 1468; sequence RMNEAADSRDCR. Ser-1464 and Ser-1469 each carry phosphoserine. Over residues 1481 to 1504 the composition is skewed to polar residues; it reads SCTTQRKLQEKSSGAGSLGNSRPS. Residues Lys-1575 and Lys-1576 each participate in a glycyl lysine isopeptide (Lys-Gly) (interchain with G-Cter in SUMO2) cross-link. Residues 1605-1746 are disordered; the sequence is TLDSDSEDES…EGEVSASQAA (142 aa). Ser-1610 carries the phosphoserine modification. The tract at residues 1632-1834 is interaction with SLX1; sequence QTYKPSRAGV…PRGKKKVERN (203 aa). The segment covering 1654 to 1672 has biased composition (basic residues); the sequence is HRPKGPAKTKGPRHQRKHH. A Glycyl lysine isopeptide (Lys-Gly) (interchain with G-Cter in SUMO2) cross-link involves residue Lys-1657. Over residues 1706–1730 the composition is skewed to low complexity; that stretch reads SVDGSDSSLSSQSSSSCEFGAAFES.

This sequence belongs to the SLX4 family. As to quaternary structure, forms a heterodimer with SLX1A/GIYD1. Interacts with ERCC4/XPF; catalytic subunit of the ERCC4-ERCC1 endonuclease. Interacts with MUS81; catalytic subunit of the MUS81-EME1 endonuclease. Interacts with MSH2; component of the MSH2-MSH3 mismatch repair complex. Interacts with TERF2-TERF2IP. Interacts with PLK1 and SLX4IP.

The protein localises to the nucleus. Its function is as follows. Regulatory subunit that interacts with and increases the activity of different structure-specific endonucleases. Has several distinct roles in protecting genome stability by resolving diverse forms of deleterious DNA structures originating from replication and recombination intermediates and from DNA damage. Component of the SLX1-SLX4 structure-specific endonuclease that resolves DNA secondary structures generated during DNA repair and recombination. Has endonuclease activity towards branched DNA substrates, introducing single-strand cuts in duplex DNA close to junctions with ss-DNA. Has a preference for 5'-flap structures, and promotes symmetrical cleavage of static and migrating Holliday junctions (HJs). Resolves HJs by generating two pairs of ligatable, nicked duplex products. Interacts with the structure-specific ERCC4-ERCC1 endonuclease and promotes the cleavage of bubble structures. Interacts with the structure-specific MUS81-EME1 endonuclease and promotes the cleavage of 3'-flap and replication fork-like structures. SLX4 is required for recovery from alkylation-induced DNA damage and is involved in the resolution of DNA double-strand breaks. The protein is Structure-specific endonuclease subunit SLX4 (SLX4) of Homo sapiens (Human).